The chain runs to 408 residues: Peptidase T (408 aa).

His-78 serves as a coordination point for Zn(2+). Asp-80 is an active-site residue. Asp-140 lines the Zn(2+) pocket. Glu-173 acts as the Proton acceptor in catalysis. Zn(2+) is bound by residues Glu-174, Asp-196, and His-379.

It belongs to the peptidase M20B family. It depends on Zn(2+) as a cofactor.

Its subcellular location is the cytoplasm. It catalyses the reaction Release of the N-terminal residue from a tripeptide.. Cleaves the N-terminal amino acid of tripeptides. This chain is Peptidase T, found in Escherichia coli (strain UTI89 / UPEC).